A 151-amino-acid polypeptide reads, in one-letter code: SsrA-binding protein (151 aa).

Belongs to the SmpB family.

It is found in the cytoplasm. Functionally, required for rescue of stalled ribosomes mediated by trans-translation. Binds to transfer-messenger RNA (tmRNA), required for stable association of tmRNA with ribosomes. tmRNA and SmpB together mimic tRNA shape, replacing the anticodon stem-loop with SmpB. tmRNA is encoded by the ssrA gene; the 2 termini fold to resemble tRNA(Ala) and it encodes a 'tag peptide', a short internal open reading frame. During trans-translation Ala-aminoacylated tmRNA acts like a tRNA, entering the A-site of stalled ribosomes, displacing the stalled mRNA. The ribosome then switches to translate the ORF on the tmRNA; the nascent peptide is terminated with the 'tag peptide' encoded by the tmRNA and targeted for degradation. The ribosome is freed to recommence translation, which seems to be the essential function of trans-translation. The polypeptide is SsrA-binding protein (Chlamydia trachomatis serovar A (strain ATCC VR-571B / DSM 19440 / HAR-13)).